The following is a 197-amino-acid chain: Small ribosomal subunit protein uS4 (197 aa).

Residues 87–147 enclose the S4 RNA-binding domain; sequence SRIDNVIFRL…ESKKNTQRMK (61 aa).

The protein belongs to the universal ribosomal protein uS4 family. As to quaternary structure, part of the 30S ribosomal subunit. Contacts protein S5. The interaction surface between S4 and S5 is involved in control of translational fidelity.

Functionally, one of the primary rRNA binding proteins, it binds directly to 16S rRNA where it nucleates assembly of the body of the 30S subunit. In terms of biological role, with S5 and S12 plays an important role in translational accuracy. The protein is Small ribosomal subunit protein uS4 of Agathobacter rectalis (strain ATCC 33656 / DSM 3377 / JCM 17463 / KCTC 5835 / VPI 0990) (Eubacterium rectale).